A 298-amino-acid polypeptide reads, in one-letter code: Acetylglutamate kinase (298 aa).

Substrate-binding positions include 73–74 (GG), R95, and N188.

The protein belongs to the acetylglutamate kinase family. ArgB subfamily.

It localises to the cytoplasm. The enzyme catalyses N-acetyl-L-glutamate + ATP = N-acetyl-L-glutamyl 5-phosphate + ADP. Its pathway is amino-acid biosynthesis; L-arginine biosynthesis; N(2)-acetyl-L-ornithine from L-glutamate: step 2/4. Functionally, catalyzes the ATP-dependent phosphorylation of N-acetyl-L-glutamate. The chain is Acetylglutamate kinase from Nostoc punctiforme (strain ATCC 29133 / PCC 73102).